The following is a 313-amino-acid chain: ADP-L-glycero-D-manno-heptose-6-epimerase (313 aa).

Residues 10–11 (FI), 31–32 (DD), arginine 38, lysine 53, 75–79 (EGACS), and asparagine 92 contribute to the NADP(+) site. Tyrosine 139 functions as the Proton acceptor in the catalytic mechanism. Lysine 143 provides a ligand contact to NADP(+). Position 168 (asparagine 168) interacts with substrate. Positions 169 and 177 each coordinate NADP(+). Lysine 177 functions as the Proton acceptor in the catalytic mechanism. Residues lysine 179, histidine 186, 200-203 (FEGW), arginine 213, and tyrosine 277 each bind substrate.

Belongs to the NAD(P)-dependent epimerase/dehydratase family. HldD subfamily. In terms of assembly, homopentamer. NADP(+) is required as a cofactor.

The catalysed reaction is ADP-D-glycero-beta-D-manno-heptose = ADP-L-glycero-beta-D-manno-heptose. It participates in nucleotide-sugar biosynthesis; ADP-L-glycero-beta-D-manno-heptose biosynthesis; ADP-L-glycero-beta-D-manno-heptose from D-glycero-beta-D-manno-heptose 7-phosphate: step 4/4. In terms of biological role, catalyzes the interconversion between ADP-D-glycero-beta-D-manno-heptose and ADP-L-glycero-beta-D-manno-heptose via an epimerization at carbon 6 of the heptose. The protein is ADP-L-glycero-D-manno-heptose-6-epimerase of Marinobacter nauticus (strain ATCC 700491 / DSM 11845 / VT8) (Marinobacter aquaeolei).